The primary structure comprises 61 residues: Large ribosomal subunit protein uL30 (61 aa).

Belongs to the universal ribosomal protein uL30 family. As to quaternary structure, part of the 50S ribosomal subunit.

This chain is Large ribosomal subunit protein uL30, found in Corynebacterium diphtheriae (strain ATCC 700971 / NCTC 13129 / Biotype gravis).